A 58-amino-acid chain; its full sequence is Potassium channel toxin alpha-KTx BmKcug1a (58 aa).

An N-terminal signal peptide occupies residues Met1–Ala21. At Gln22 the chain carries Pyrrolidone carboxylic acid. Cystine bridges form between Cys28–Cys49, Cys34–Cys54, and Cys38–Cys56.

The protein belongs to the short scorpion toxin superfamily. Potassium channel inhibitor family. Alpha-KTx 01 subfamily. Expressed by the venom gland.

The protein localises to the secreted. In terms of biological role, potent blocker of both large-conductance calcium-activated potassium channels (KCa1.1/KCNMA1) and voltage-gated potassium channels (Kv1.3/KCNA3 and ERG1/Kv11.1/KCNH2). The protein is Potassium channel toxin alpha-KTx BmKcug1a of Olivierus martensii (Manchurian scorpion).